The following is a 92-amino-acid chain: PqqA binding protein (92 aa).

Belongs to the PqqD family. As to quaternary structure, monomer. Interacts with PqqE.

It functions in the pathway cofactor biosynthesis; pyrroloquinoline quinone biosynthesis. In terms of biological role, functions as a PqqA binding protein and presents PqqA to PqqE, in the pyrroloquinoline quinone (PQQ) biosynthetic pathway. This chain is PqqA binding protein, found in Stutzerimonas stutzeri (strain A1501) (Pseudomonas stutzeri).